The chain runs to 117 residues: Large ribosomal subunit protein bL19 (117 aa).

This sequence belongs to the bacterial ribosomal protein bL19 family.

This protein is located at the 30S-50S ribosomal subunit interface and may play a role in the structure and function of the aminoacyl-tRNA binding site. This Shewanella sediminis (strain HAW-EB3) protein is Large ribosomal subunit protein bL19.